A 245-amino-acid chain; its full sequence is DNA polymerase sliding clamp (245 aa).

Belongs to the PCNA family. As to quaternary structure, homotrimer. The subunits circularize to form a toroid; DNA passes through its center. Replication factor C (RFC) is required to load the toroid on the DNA.

Sliding clamp subunit that acts as a moving platform for DNA processing. Responsible for tethering the catalytic subunit of DNA polymerase and other proteins to DNA during high-speed replication. The polypeptide is DNA polymerase sliding clamp (Archaeoglobus fulgidus (strain ATCC 49558 / DSM 4304 / JCM 9628 / NBRC 100126 / VC-16)).